The following is a 414-amino-acid chain: uncharacterized protein (414 aa).

The first 20 residues, 1 to 20 (MKKLLAIGILCIMVTAVMSG), serve as a signal peptide directing secretion. Residue cysteine 21 is the site of S-archaeol cysteine attachment. The Fe/B12 periplasmic-binding domain maps to 119–389 (RVIVMSSTEI…DLATILHPEA (271 aa)).

It localises to the cell membrane. This is an uncharacterized protein from Methanocaldococcus jannaschii (strain ATCC 43067 / DSM 2661 / JAL-1 / JCM 10045 / NBRC 100440) (Methanococcus jannaschii).